Reading from the N-terminus, the 433-residue chain is Adenylosuccinate synthetase (433 aa).

GTP contacts are provided by residues 11–17 (GDEGKGK) and 39–41 (GHT). Aspartate 12 (proton acceptor) is an active-site residue. 2 residues coordinate Mg(2+): aspartate 12 and glycine 39. IMP is bound by residues 12 to 15 (DEGK), 37 to 40 (NAGH), threonine 134, arginine 148, asparagine 230, threonine 245, and arginine 309. The active-site Proton donor is histidine 40. 305 to 311 (VTTGRKR) is a binding site for substrate. GTP contacts are provided by residues arginine 311, 337–339 (KLD), and 419–421 (GTG).

Belongs to the adenylosuccinate synthetase family. In terms of assembly, homodimer. Mg(2+) serves as cofactor.

It localises to the cytoplasm. The enzyme catalyses IMP + L-aspartate + GTP = N(6)-(1,2-dicarboxyethyl)-AMP + GDP + phosphate + 2 H(+). It functions in the pathway purine metabolism; AMP biosynthesis via de novo pathway; AMP from IMP: step 1/2. Functionally, plays an important role in the de novo pathway and in the salvage pathway of purine nucleotide biosynthesis. Catalyzes the first committed step in the biosynthesis of AMP from IMP. In Saccharomyces cerevisiae (strain Lalvin EC1118 / Prise de mousse) (Baker's yeast), this protein is Adenylosuccinate synthetase.